A 203-amino-acid chain; its full sequence is Somatotropin (203 aa).

The signal sequence occupies residues 1–17 (MDRVVIVLSVLSVAASS). Q18 is subject to Pyrrolidone carboxylic acid. H35 is a Zn(2+) binding site. Cysteines 68 and 176 form a disulfide. A Zn(2+)-binding site is contributed by E185. Cysteines 193 and 201 form a disulfide.

This sequence belongs to the somatotropin/prolactin family.

The protein resides in the secreted. Growth hormone plays an important role in growth control and is involved in the regulation of several anabolic processes. Implicated as an osmoregulatory substance important for seawater adaptation. This is Somatotropin (gh) from Solea senegalensis (Senegalese sole).